Reading from the N-terminus, the 438-residue chain is GDP-mannose 6-dehydrogenase (438 aa).

Positions 10, 11, 30, 35, 86, and 124 each coordinate NAD(+). Residues glutamate 161, lysine 210, asparagine 214, histidine 217, asparagine 225, tyrosine 256, tyrosine 257, arginine 259, phenylalanine 262, and glycine 265 each coordinate GDP-alpha-D-mannuronate. Residue cysteine 268 is part of the active site. Residue lysine 271 participates in NAD(+) binding. A GDP-alpha-D-mannuronate-binding site is contributed by lysine 324. Arginine 331 lines the NAD(+) pocket.

The protein belongs to the UDP-glucose/GDP-mannose dehydrogenase family.

It carries out the reaction GDP-alpha-D-mannose + 2 NAD(+) + H2O = GDP-alpha-D-mannuronate + 2 NADH + 3 H(+). It functions in the pathway glycan biosynthesis; alginate biosynthesis. Functionally, catalyzes the oxidation of guanosine diphospho-D-mannose (GDP-D-mannose) to GDP-D-mannuronic acid, a precursor for alginate polymerization. The alginate layer causes a mucoid phenotype and provides a protective barrier against host immune defenses and antibiotics. The protein is GDP-mannose 6-dehydrogenase (algD) of Pseudomonas syringae pv. syringae.